The primary structure comprises 355 residues: Probable butyrate kinase (355 aa).

Belongs to the acetokinase family.

The protein localises to the cytoplasm. The enzyme catalyses butanoate + ATP = butanoyl phosphate + ADP. In Listeria monocytogenes serotype 4b (strain CLIP80459), this protein is Probable butyrate kinase.